The sequence spans 160 residues: Nucleotide-binding protein MADE_1020535 (160 aa).

This sequence belongs to the YajQ family.

Functionally, nucleotide-binding protein. The chain is Nucleotide-binding protein MADE_1020535 from Alteromonas mediterranea (strain DSM 17117 / CIP 110805 / LMG 28347 / Deep ecotype).